The chain runs to 25 residues: GVVDILKGAGKDLLAHLVGKISEKV.

At valine 25 the chain carries Valine amide.

In terms of tissue distribution, expressed by the skin dorsal glands.

It is found in the secreted. Its function is as follows. Has hemolytic activity against human erythrocytes and antibacterial activity against the Gram-negative bacterium E.coli. The chain is Ocellatin-1 from Leptodactylus ocellatus (Argus frog).